The following is a 161-amino-acid chain: Nucleotide-binding protein Plav_2177 (161 aa).

This sequence belongs to the YajQ family.

Its function is as follows. Nucleotide-binding protein. The polypeptide is Nucleotide-binding protein Plav_2177 (Parvibaculum lavamentivorans (strain DS-1 / DSM 13023 / NCIMB 13966)).